The primary structure comprises 387 residues: MSKRDYYEILEVSATASEGEIKKAYRKLAMRYHPDRNPDDEEAEDKFKEASEAYEVLSDAQKRQAYDQFGHAGVDGSAGQGGFGGGGFADFGDIFGDIFGGGFGGGHRGPQPGSDLQYELEVSLEDAVAGTTVDVRIPTKELCESCDGSGAEPGSDVQTCPTCQGIGQVRVQQGFFAVSRTCPNCHGTGKLVKTPCKTCRGEGYKHSSKTLSVKIPAGVDNGDRIRLQGEGEAGEPGAPHGDLYVRIRVKEHKIFQRDGNTLFCDMPLSFATATLGGTMDVPTLNGKANLKIPAGTQSGQRFKLAGKGVKSVRSSHVGDMIVEVHIETPVKLTSEQKELLKAFDESLQGKHHKQHSPKTHSFFDSVKAFFKGDDEDGGNDKKDGPWN.

A J domain is found at 5 to 70 (DYYEILEVSA…QKRQAYDQFG (66 aa)). The CR-type zinc finger occupies 130 to 208 (GTTVDVRIPT…CRGEGYKHSS (79 aa)). 8 residues coordinate Zn(2+): Cys143, Cys146, Cys160, Cys163, Cys182, Cys185, Cys196, and Cys199. CXXCXGXG motif repeat units lie at residues 143-150 (CESCDGSG), 160-167 (CPTCQGIG), 182-189 (CPNCHGTG), and 196-203 (CKTCRGEG).

Belongs to the DnaJ family. Homodimer. Zn(2+) serves as cofactor.

Its subcellular location is the cytoplasm. In terms of biological role, participates actively in the response to hyperosmotic and heat shock by preventing the aggregation of stress-denatured proteins and by disaggregating proteins, also in an autonomous, DnaK-independent fashion. Unfolded proteins bind initially to DnaJ; upon interaction with the DnaJ-bound protein, DnaK hydrolyzes its bound ATP, resulting in the formation of a stable complex. GrpE releases ADP from DnaK; ATP binding to DnaK triggers the release of the substrate protein, thus completing the reaction cycle. Several rounds of ATP-dependent interactions between DnaJ, DnaK and GrpE are required for fully efficient folding. Also involved, together with DnaK and GrpE, in the DNA replication of plasmids through activation of initiation proteins. This is Chaperone protein DnaJ from Hydrogenovibrio crunogenus (strain DSM 25203 / XCL-2) (Thiomicrospira crunogena).